A 239-amino-acid polypeptide reads, in one-letter code: Large ribosomal subunit protein bL25 (239 aa).

Residues 217–239 (IKAEAHAAEGTQAEGSTEEGQQQ) form a disordered region. Polar residues predominate over residues 229-239 (AEGSTEEGQQQ).

The protein belongs to the bacterial ribosomal protein bL25 family. CTC subfamily. As to quaternary structure, part of the 50S ribosomal subunit; part of the 5S rRNA/L5/L18/L25 subcomplex. Contacts the 5S rRNA. Binds to the 5S rRNA independently of L5 and L18.

This is one of the proteins that binds to the 5S RNA in the ribosome where it forms part of the central protuberance. In Deinococcus deserti (strain DSM 17065 / CIP 109153 / LMG 22923 / VCD115), this protein is Large ribosomal subunit protein bL25.